Reading from the N-terminus, the 1360-residue chain is MASRQCPPAAVFNSMNPPVNSYVEHCYLRSPNVMAEGMNEMPYCHQTNLMTSHHGFGLAQGSDHLAGTDGSRFSTPRSTMKLSKKRAMSISPLSDASIDLQTMIRTSPNSLVAFINSRCSSASGSYGHLSIGTISPSLGYQNCLNHQRPQAGPYGSNPLMPYNSHEHLSSRGMSMLQPRSSVKHCQLKSEPLSITGLDTIGSKRLEDGSEGDISSPASVGTQDPLLGLLDGRDDLEKDDGKHEPETVYETNCHWESCTKEFDTQEHLVHHINNEHIHGEKKEFVCHWQDCSRELRPFKAQYMLVVHMRRHTGEKPHKCTFEGCNKAYSRLENLKTHLRSHTGEKPYVCEHEGCNKAFSNASDRAKHQNRTHSNEKPYVCKIPGCTKRYTDPSSLRKHVKTVHGPEAHITKKHRGDGMLRAQPGHEGPGNQNVKGENQLDMEASSACKEDGRLAVPDITLKSQPSPGGQSSCSSERSPLGSTNNNDSGVEMNANTGGSFEDLTNLDDIPSVDSMGTAGASALRKLENLRIDKLNQLRKTPSSGKMVKLPSIHNSGPQGDMSVVCGPLGMSHNQHGIELPASSHVNHLNDRRNSTTSTMSSAYTVSRRSSVVSPYLPNQRAGDSGNMVDSYDISTDPSGHSNEAVCASGLPGLTPAQQYRLKAKYAAATGGPPPTPLPNMERMNTNNRMAFASSDYRGSAISSLQRRHSSNEYHNYGTGIIHPAQAPGAGIRRASDPARTGGDIQAVPKVQRFKSMTNMNVSMMGRQGTSIQQAYGGSDANLQRHMFSPRPPSITENVFMETAGPDEVCHTKEQGFIQSNEMQHYMNYQGQGSQLTAPNDHMNFNPQIHGLDGQSQNVYSHSQRAISNMHLNAENYSGQSNVSNFNQCQMTAHNQHFQNTRQAYNCANLPVQWNEVSSGTMDNPVQRPNHQIMHQNMSPGNHCQSQLSNCTVPESTKQGCPVNRNSCQQGMYMNNQKYNHGGQVQVKPEQQFHHSAPAMMSCQNMKHPSRQEHHFTKTNTMPLSSEATNCDYQGQQDSTQNSCFNVGLNLNLLSPPGRRSQTPIMQVKEIMVRNYVQSQQALMWEQHPKSMAMMTNSGDDVDTRQNQHKNTLNAAVYMGPKYMNYQGKPSPNNLMSPSSQDSQSSHTKAMGSPSSQCYNFDMMPHPPCGPKPLSRQHSVSSQSTYMGSPNQLSPSYQSSESSPRRMACLPPIQPQSEVTNNTSMMYYTGQMEMHQSKPGVHKLTTPLNLNQTSCDGHQHGQYNASHSFLKTVPYTSSCPAANTLDSLDLENTQIDFTAIIDDADNALMPGNISPNVLAGSSQASSHLTTLRNTGAVVPNMVVGDLNSMLSSLAGENKYLNTM.

Positions 198 to 245 (DTIGSKRLEDGSEGDISSPASVGTQDPLLGLLDGRDDLEKDDGKHEPE) are disordered. Over residues 230–245 (DGRDDLEKDDGKHEPE) the composition is skewed to basic and acidic residues. The segment at 250-275 (TNCHWESCTKEFDTQEHLVHHINNEH) adopts a C2H2-type 1 zinc-finger fold. The interaction with DNA stretch occupies residues 298 to 306 (KAQYMLVVH). 3 consecutive C2H2-type zinc fingers follow at residues 316–340 (HKCT…LRSH), 346–371 (YVCE…NRTH), and 377–402 (YVCK…KTVH). Interaction with DNA stretches follow at residues 360–365 (ASDRAK) and 390–396 (DPSSLRK). Disordered stretches follow at residues 390 to 434 (DPSS…NVKG), 457 to 500 (ITLK…SFED), 718 to 740 (IIHP…RTGG), and 1120 to 1213 (YMNY…IQPQ). Positions 461–473 (SQPSPGGQSSCSS) are enriched in low complexity. The span at 474–496 (ERSPLGSTNNNDSGVEMNANTGG) shows a compositional bias: polar residues. A compositionally biased stretch (low complexity) spans 1134 to 1143 (SPSSQDSQSS). Residues 1173–1190 (RQHSVSSQSTYMGSPNQL) show a composition bias toward polar residues.

It belongs to the GLI C2H2-type zinc-finger protein family.

The protein localises to the cytoplasm. It localises to the nucleus. Acts as a transcriptional activator. Binds to the DNA consensus sequence 5'-GACCACCCA-3'. May regulate the transcription of specific genes during normal development. Mediates SHH signaling. Plays a role in cell proliferation and differentiation via its role in SHH signaling. This chain is Zinc finger protein GLI1 (gli1), found in Xenopus laevis (African clawed frog).